The primary structure comprises 159 residues: Peptide methionine sulfoxide reductase MsrB (159 aa).

The MsrB domain maps to 22–144 (RERLEANLTA…NSVSLQFVKA (123 aa)). Residues C61, C64, C110, and C113 each coordinate Zn(2+). C133 (nucleophile) is an active-site residue.

The protein belongs to the MsrB Met sulfoxide reductase family. Zn(2+) is required as a cofactor.

The catalysed reaction is L-methionyl-[protein] + [thioredoxin]-disulfide + H2O = L-methionyl-(R)-S-oxide-[protein] + [thioredoxin]-dithiol. This is Peptide methionine sulfoxide reductase MsrB from Caulobacter vibrioides (strain ATCC 19089 / CIP 103742 / CB 15) (Caulobacter crescentus).